The sequence spans 105 residues: Pyrimidine/purine nucleoside phosphorylase (105 aa).

It belongs to the nucleoside phosphorylase PpnP family.

It carries out the reaction a purine D-ribonucleoside + phosphate = a purine nucleobase + alpha-D-ribose 1-phosphate. It catalyses the reaction adenosine + phosphate = alpha-D-ribose 1-phosphate + adenine. The enzyme catalyses cytidine + phosphate = cytosine + alpha-D-ribose 1-phosphate. The catalysed reaction is guanosine + phosphate = alpha-D-ribose 1-phosphate + guanine. It carries out the reaction inosine + phosphate = alpha-D-ribose 1-phosphate + hypoxanthine. It catalyses the reaction thymidine + phosphate = 2-deoxy-alpha-D-ribose 1-phosphate + thymine. The enzyme catalyses uridine + phosphate = alpha-D-ribose 1-phosphate + uracil. The catalysed reaction is xanthosine + phosphate = alpha-D-ribose 1-phosphate + xanthine. Functionally, catalyzes the phosphorolysis of diverse nucleosides, yielding D-ribose 1-phosphate and the respective free bases. Can use uridine, adenosine, guanosine, cytidine, thymidine, inosine and xanthosine as substrates. Also catalyzes the reverse reactions. The chain is Pyrimidine/purine nucleoside phosphorylase from Ralstonia nicotianae (strain ATCC BAA-1114 / GMI1000) (Ralstonia solanacearum).